The following is a 375-amino-acid chain: Putative nuclease YhcG (375 aa).

Interacts with DNA processing enzymes, including the restriction complex HsdMRS, the integrases IntF and IntS, and the recombinase PinE.

In terms of biological role, may be a nuclease involved in DNA recombination and repair. This Escherichia coli (strain K12) protein is Putative nuclease YhcG (yhcG).